We begin with the raw amino-acid sequence, 396 residues long: UDP-galactose translocator (396 aa).

10 helical membrane passes run 3–23 (AVGA…AGAL), 37–57 (YISL…IRYA), 65–85 (FFAT…CLLL), 97–117 (LVLF…KLAV), 140–160 (TFQV…VLML), 169–189 (WASL…QAGG), 200–220 (GAGL…GVYF), 238–258 (LGLF…GTAV), 269–289 (PAVW…AVVV), and 315–335 (LFGF…IGAV). A disordered region spans residues 358 to 379 (PCVHQQPPGQPPPPQLSSHRGD). The short motif at 392-396 (KVKGS) is the ER retention motif element.

Belongs to the nucleotide-sugar transporter family. SLC35A subfamily. In terms of assembly, interacts with SLC35A3; the interaction is reduced in the presence of SLC35A4. Found in a complex with SLC35A3 and SLC35A4. Interacts with B4GALT4.

It is found in the endoplasmic reticulum membrane. It localises to the golgi apparatus membrane. It carries out the reaction UMP(out) + UDP-alpha-D-galactose(in) = UMP(in) + UDP-alpha-D-galactose(out). The enzyme catalyses UDP-N-acetyl-alpha-D-galactosamine(in) + UMP(out) = UDP-N-acetyl-alpha-D-galactosamine(out) + UMP(in). It catalyses the reaction UMP(out) + UDP-alpha-D-glucose(in) = UMP(in) + UDP-alpha-D-glucose(out). The catalysed reaction is UMP(out) + UDP-N-acetyl-alpha-D-glucosamine(in) = UMP(in) + UDP-N-acetyl-alpha-D-glucosamine(out). It carries out the reaction UDP-alpha-D-galactose(in) + AMP(out) = UDP-alpha-D-galactose(out) + AMP(in). The enzyme catalyses UDP-alpha-D-galactose(in) + CMP(out) = UDP-alpha-D-galactose(out) + CMP(in). It catalyses the reaction UDP-N-acetyl-alpha-D-galactosamine(out) + UDP-alpha-D-galactose(in) = UDP-N-acetyl-alpha-D-galactosamine(in) + UDP-alpha-D-galactose(out). The catalysed reaction is UDP-N-acetyl-alpha-D-glucosamine(out) + UDP-alpha-D-galactose(in) = UDP-N-acetyl-alpha-D-glucosamine(in) + UDP-alpha-D-galactose(out). It carries out the reaction UDP-alpha-D-galactose(in) + UDP-alpha-D-glucose(out) = UDP-alpha-D-galactose(out) + UDP-alpha-D-glucose(in). The enzyme catalyses UMP(out) + CMP(in) = UMP(in) + CMP(out). It catalyses the reaction UMP(out) + AMP(in) = UMP(in) + AMP(out). Its function is as follows. Transports uridine diphosphate galactose (UDP-galactose) from the cytosol into the Golgi apparatus, functioning as an antiporter that exchanges UDP-galactose for UMP. It is also able to exchange UDP-galactose for AMP and CMP, and to transport UDP-N-acetylgalactosamine (UDP-GalNAc) and other nucleotide sugars. As a provider of UDP-galactose to galactosyltransferases present in the Golgi apparatus, it is necessary for globotriaosylceramide/globoside (Gb3Cer) synthesis from lactosylceramide. This Homo sapiens (Human) protein is UDP-galactose translocator.